Consider the following 509-residue polypeptide: Bifunctional pantoate ligase/cytidylate kinase (509 aa).

Residues 1–275 (MKKLIIRKTE…CGETRLIDHV (275 aa)) form a pantoate--beta-alanine ligase region. 29–36 (MGNLHDGH) contacts ATP. His-36 functions as the Proton donor in the catalytic mechanism. Gln-61 serves as a coordination point for (R)-pantoate. Position 61 (Gln-61) interacts with beta-alanine. Position 149-152 (149-152 (GEKD)) interacts with ATP. Residue Gln-155 participates in (R)-pantoate binding. Residue 186–189 (LSSR) participates in ATP binding. The tract at residues 276 to 509 (FLMKRRPIIA…DKIPKESEIK (234 aa)) is cytidylate kinase.

In the N-terminal section; belongs to the pantothenate synthetase family. The protein in the C-terminal section; belongs to the cytidylate kinase family. Type 1 subfamily.

The protein resides in the cytoplasm. It carries out the reaction (R)-pantoate + beta-alanine + ATP = (R)-pantothenate + AMP + diphosphate + H(+). It catalyses the reaction CMP + ATP = CDP + ADP. The catalysed reaction is dCMP + ATP = dCDP + ADP. It participates in cofactor biosynthesis; (R)-pantothenate biosynthesis; (R)-pantothenate from (R)-pantoate and beta-alanine: step 1/1. Functionally, catalyzes the condensation of pantoate with beta-alanine in an ATP-dependent reaction via a pantoyl-adenylate intermediate. In terms of biological role, catalyzes the transfer of a phosphate group from ATP to either CMP or dCMP to form CDP or dCDP and ADP, respectively. The protein is Bifunctional pantoate ligase/cytidylate kinase of Prochlorococcus marinus (strain AS9601).